The chain runs to 151 residues: UPF0756 membrane protein Lreu_0946 (151 aa).

4 helical membrane-spanning segments follow: residues 4–24, 52–72, 77–97, and 115–135; these read WLFL…SLII, WGVT…QIGF, AAFK…VAIL, and LVLG…GPVI.

Belongs to the UPF0756 family.

The protein resides in the cell membrane. This chain is UPF0756 membrane protein Lreu_0946, found in Limosilactobacillus reuteri (strain DSM 20016) (Lactobacillus reuteri).